The following is a 189-amino-acid chain: Chitin synthase 1 (189 aa).

Belongs to the chitin synthase family. Class I subfamily.

The protein resides in the cell membrane. The enzyme catalyses [(1-&gt;4)-N-acetyl-beta-D-glucosaminyl](n) + UDP-N-acetyl-alpha-D-glucosamine = [(1-&gt;4)-N-acetyl-beta-D-glucosaminyl](n+1) + UDP + H(+). Functionally, polymerizes chitin, a structural polymer of the cell wall and septum, by transferring the sugar moiety of UDP-GlcNAc to the non-reducing end of the growing chitin polymer. The chain is Chitin synthase 1 (CHS1) from Rhinocladiella atrovirens.